The chain runs to 335 residues: Homeobox protein Hox-A1 (335 aa).

The segment at 61–80 (IGSPHHHHHHHHRHPQPATY) is disordered. Positions 64–75 (PHHHHHHHHRHP) are enriched in basic residues. The tract at residues 75-203 (PQPATYQTSG…PASETSSPAQ (129 aa)) is interaction with OGT. Residues 204 to 209 (TFDWMK) carry the Antp-type hexapeptide motif. The homeobox DNA-binding region spans 229-288 (PNAVRTNFTTKQLTELEKEFHFNKYLTRARRVEIAASLQLNETQVKIWFQNRRMKQKKRE). Positions 281–335 (RMKQKKREKEGLLPISPATPPGNDEKAEESSEKSSSSPCVPSPGSSTSDTLTTSH) are disordered. Basic and acidic residues predominate over residues 303 to 312 (NDEKAEESSE). Low complexity predominate over residues 313–328 (KSSSSPCVPSPGSSTS).

It belongs to the Antp homeobox family. Labial subfamily. In terms of assembly, interacts with OGT (via TPR repeats domain); the interaction takes place mainly in the nucleus. Forms a DNA-binding heterodimer with transcription factor PBX1.

It is found in the nucleus. In terms of biological role, sequence-specific transcription factor. Regulates multiple developmental processes including brainstem, inner and outer ear, abducens nerve and cardiovascular development and morphogenesis as well as cognition and behavior. Also part of a developmental regulatory system that provides cells with specific positional identities on the anterior-posterior axis. Acts on the anterior body structures. Seems to act in the maintenance and/or generation of hindbrain segments. Activates transcription in the presence of PBX1A and PKNOX1. This Homo sapiens (Human) protein is Homeobox protein Hox-A1 (HOXA1).